The sequence spans 431 residues: 3-isopropylmalate dehydratase large subunit (431 aa).

[4Fe-4S] cluster contacts are provided by cysteine 300, cysteine 360, and cysteine 363.

This sequence belongs to the aconitase/IPM isomerase family. LeuC type 2 subfamily. In terms of assembly, heterodimer of LeuC and LeuD. [4Fe-4S] cluster is required as a cofactor.

The catalysed reaction is (2R,3S)-3-isopropylmalate = (2S)-2-isopropylmalate. It participates in amino-acid biosynthesis; L-leucine biosynthesis; L-leucine from 3-methyl-2-oxobutanoate: step 2/4. In terms of biological role, catalyzes the isomerization between 2-isopropylmalate and 3-isopropylmalate, via the formation of 2-isopropylmaleate. The chain is 3-isopropylmalate dehydratase large subunit from Sulfurihydrogenibium sp. (strain YO3AOP1).